We begin with the raw amino-acid sequence, 101 residues long: Putative monooxygenase Rv0793 (101 aa).

The region spanning 5-93 (VAVIARFMPR…LTRPVAVTVL (89 aa)) is the ABM domain.

As to quaternary structure, homodimer.

Putative monooygenase that might be involved in antibiotic biosynthesis, or may act as reactive oxygen species scavenger that could help in evading host defenses. This chain is Putative monooxygenase Rv0793, found in Mycobacterium tuberculosis (strain ATCC 25618 / H37Rv).